A 237-amino-acid chain; its full sequence is UPF0758 protein Aave_3773 (237 aa).

The MPN domain maps to 115–237 (LFHSPRAVRD…SLSMAEEGLI (123 aa)). Zn(2+) contacts are provided by H186, H188, and D199. The JAMM motif motif lies at 186-199 (HNHPSGQVQPSRAD).

Belongs to the UPF0758 family.

The polypeptide is UPF0758 protein Aave_3773 (Paracidovorax citrulli (strain AAC00-1) (Acidovorax citrulli)).